Consider the following 285-residue polypeptide: 2-hydroxy-6-oxononadienedioate/2-hydroxy-6-oxononatrienedioate hydrolase 1 (285 aa).

The active-site Proton acceptor is H265.

This sequence belongs to the AB hydrolase superfamily. MhpC family. In terms of assembly, homodimer.

It carries out the reaction (2Z,4E)-2-hydroxy-6-oxonona-2,4-dienedioate + H2O = (2Z)-2-hydroxypenta-2,4-dienoate + succinate + H(+). The enzyme catalyses (2Z,4E,7E)-2-hydroxy-6-oxonona-2,4,7-trienedioate + H2O = (2Z)-2-hydroxypenta-2,4-dienoate + fumarate + H(+). It participates in aromatic compound metabolism; 3-phenylpropanoate degradation. Functionally, catalyzes the cleavage of the C5-C6 bond of 2-hydroxy-6-oxononadienedioate and 2-hydroxy-6-oxononatrienedioate, a dienol ring fission product of the bacterial meta-cleavage pathway for degradation of phenylpropionic acid. The sequence is that of 2-hydroxy-6-oxononadienedioate/2-hydroxy-6-oxononatrienedioate hydrolase 1 from Pseudomonas putida (Arthrobacter siderocapsulatus).